The primary structure comprises 473 residues: UDP-N-acetylmuramate--L-alanine ligase (473 aa).

112–118 (GTHGKTT) provides a ligand contact to ATP.

The protein belongs to the MurCDEF family.

It localises to the cytoplasm. The catalysed reaction is UDP-N-acetyl-alpha-D-muramate + L-alanine + ATP = UDP-N-acetyl-alpha-D-muramoyl-L-alanine + ADP + phosphate + H(+). The protein operates within cell wall biogenesis; peptidoglycan biosynthesis. Functionally, cell wall formation. This Nitrosomonas eutropha (strain DSM 101675 / C91 / Nm57) protein is UDP-N-acetylmuramate--L-alanine ligase.